We begin with the raw amino-acid sequence, 383 residues long: MKFPRIGLPKEKVIELINEKTKKDLTFSSGKILGSMCTMPHDLAIEVYTKYIDRNLGDPGLHPGTRKIEEEVIEMISDLLHLEKGHGHIVSGGTEANILAVRAFRNLSDVEKPELILPKSAHFSFIKAGEMLGVKLVWAELNPDYTVDVRDVEAKISDNTIGIVGIAGTTGLGVVDDIPALSDLARDYGIPLHVDAAFGGFVIPFAKELGYELPDFDFKLKGVQSITIDPHKMGMAPIPAGGIVFRRKKYLKAISVLAPYLAGGKVWQATITGTRPGASVIAVWALIKHLGFEGYMRIVERAMKLSRWFAEEIKKINNAWLVREPMLNIVSFQTKNLKKVERELKSRGWGISAHRGYIRIVFMPHVTREMIEEFLKDLKEVLS.

Lysine 232 carries the N6-(pyridoxal phosphate)lysine modification.

This sequence belongs to the group II decarboxylase family. MfnA subfamily. In terms of assembly, monomer. Pyridoxal 5'-phosphate serves as cofactor.

The catalysed reaction is L-aspartate + H(+) = beta-alanine + CO2. It catalyses the reaction L-glutamate + H(+) = 4-aminobutanoate + CO2. The enzyme catalyses L-cysteate + H(+) = taurine + CO2. It carries out the reaction 3-sulfino-L-alanine + H(+) = hypotaurine + CO2. Its pathway is cofactor biosynthesis; coenzyme A biosynthesis. Its function is as follows. Catalyzes the decarboxylation of L-aspartate to produce beta-alanine, and the decarboxylation of L-glutamate to produce 4-aminobutanoate. Can also use cysteate and, to a lesser extent, cysteine sulfite (3-sulfino-L-alanine), but not L-tyrosine. Specific activities toward L-aspartate and cysteate are higher than toward L-glutamate. The sequence is that of L-aspartate/L-glutamate decarboxylase from Pyrococcus horikoshii (strain ATCC 700860 / DSM 12428 / JCM 9974 / NBRC 100139 / OT-3).